We begin with the raw amino-acid sequence, 138 residues long: Large ribosomal subunit protein mL54 (138 aa).

The N-terminal 14 residues, 1-14 (MATKRLFGATRTWA), are a transit peptide targeting the mitochondrion.

The protein belongs to the mitochondrion-specific ribosomal protein mL54 family. As to quaternary structure, component of the mitochondrial large ribosomal subunit (mt-LSU). Mature mammalian 55S mitochondrial ribosomes consist of a small (28S) and a large (39S) subunit. The 28S small subunit contains a 12S ribosomal RNA (12S mt-rRNA) and 30 different proteins. The 39S large subunit contains a 16S rRNA (16S mt-rRNA), a copy of mitochondrial valine transfer RNA (mt-tRNA(Val)), which plays an integral structural role, and 52 different proteins.

It localises to the mitochondrion. This Homo sapiens (Human) protein is Large ribosomal subunit protein mL54 (MRPL54).